We begin with the raw amino-acid sequence, 578 residues long: Protein BONZAI 1 (578 aa).

Residue Gly2 is the site of N-myristoyl glycine attachment. C2 domains lie at 26–163 and 176–303; these read ALGA…TSTL and QPHH…NFSL. Ca(2+) contacts are provided by Asp63, Asp69, Asp122, and Asp124. The region spanning 341-560 is the VWFA domain; that stretch reads NFMVAIDFTA…SVVQALLAEL (220 aa).

It belongs to the copine family. In terms of assembly, interacts (via VWA domain) with BAP1 and BAP2. Interacts with HSP70-1 and HSP70-2. The cofactor is Ca(2+). Based on mass spectrometry analysis, the N-peptide must be modified and there might be additional modifications other than myristoylation. As to expression, expressed in roots and flowers and, at higher levels, in leaves and stems. Strongly expressed in growing tissues. Not detected in green siliques.

Its subcellular location is the cell membrane. Negative regulator of cell death and defense responses. Negative regulator of several R genes, including SNC1. May have effects in promoting growth and development. May function in membrane trafficking and in fusion of vesicles with plasma membrane at low temperature. Exhibits calcium-dependent phospholipid binding properties. The protein is Protein BONZAI 1 (BON1) of Arabidopsis thaliana (Mouse-ear cress).